The sequence spans 439 residues: Probable eukaryotic translation initiation factor 5-1 (439 aa).

Residue 29–36 (GRGNGIKT) participates in GTP binding. Residues 143–245 (LKNPPEQKKS…REAAEKRMKE (103 aa)) are disordered. Residues 147-186 (PEQKKSSKDKKSMRRAEKERLREGEAADEEMRKLKKEAAS) are compositionally biased toward basic and acidic residues. Acidic residues predominate over residues 214 to 228 (DENDQADSEEDDDDV). Threonine 232 bears the Phosphothreonine mark. Basic and acidic residues predominate over residues 234–245 (TSREAAEKRMKE). Residues 283 to 439 (KIPENAHEKL…QNAESESEEE (157 aa)) form the W2 domain. Serine 434 and serine 436 each carry phosphoserine.

It belongs to the eIF-2-beta/eIF-5 family.

In terms of biological role, catalyzes the hydrolysis of GTP bound to the 40S ribosomal initiation complex (40S.mRNA.Met-tRNA[F].eIF-2.GTP) with the subsequent joining of a 60S ribosomal subunit resulting in the release of eIF-2 and the guanine nucleotide. The subsequent joining of a 60S ribosomal subunit results in the formation of a functional 80S initiation complex (80S.mRNA.Met-tRNA[F]). This Arabidopsis thaliana (Mouse-ear cress) protein is Probable eukaryotic translation initiation factor 5-1.